Reading from the N-terminus, the 485-residue chain is Adenosylhomocysteinase (485 aa).

Threonine 64, aspartate 139, and glutamate 205 together coordinate substrate. 206-208 provides a ligand contact to NAD(+); the sequence is TTT. 2 residues coordinate substrate: lysine 235 and aspartate 239. NAD(+) is bound by residues asparagine 240, 269–274, glutamate 292, asparagine 327, 348–350, and asparagine 397; these read GYGDVG and IGH.

Belongs to the adenosylhomocysteinase family. NAD(+) is required as a cofactor.

It catalyses the reaction S-adenosyl-L-homocysteine + H2O = L-homocysteine + adenosine. The protein operates within amino-acid biosynthesis; L-homocysteine biosynthesis; L-homocysteine from S-adenosyl-L-homocysteine: step 1/1. Adenosylhomocysteine is a competitive inhibitor of S-adenosyl-L-methionine-dependent methyl transferase reactions; therefore adenosylhomocysteinase may play a key role in the control of methylations via regulation of the intracellular concentration of adenosylhomocysteine. The sequence is that of Adenosylhomocysteinase (SAHH) from Lupinus luteus (European yellow lupine).